A 482-amino-acid polypeptide reads, in one-letter code: tRNA sulfurtransferase (482 aa).

The THUMP domain maps to 58-160 (VEALQELSRV…GNKAYLYSNV (103 aa)). Residues 178–179 (LF), 203–204 (HY), Arg260, Gly282, and Gln291 each bind ATP. Residues Cys341 and Cys444 are joined by a disulfide bond. The region spanning 400–482 (IPGDSIIIDV…RYRAGLEKTR (83 aa)) is the Rhodanese domain. Cys444 serves as the catalytic Cysteine persulfide intermediate.

Belongs to the ThiI family.

It is found in the cytoplasm. It catalyses the reaction [ThiI sulfur-carrier protein]-S-sulfanyl-L-cysteine + a uridine in tRNA + 2 reduced [2Fe-2S]-[ferredoxin] + ATP + H(+) = [ThiI sulfur-carrier protein]-L-cysteine + a 4-thiouridine in tRNA + 2 oxidized [2Fe-2S]-[ferredoxin] + AMP + diphosphate. The catalysed reaction is [ThiS sulfur-carrier protein]-C-terminal Gly-Gly-AMP + S-sulfanyl-L-cysteinyl-[cysteine desulfurase] + AH2 = [ThiS sulfur-carrier protein]-C-terminal-Gly-aminoethanethioate + L-cysteinyl-[cysteine desulfurase] + A + AMP + 2 H(+). It participates in cofactor biosynthesis; thiamine diphosphate biosynthesis. Catalyzes the ATP-dependent transfer of a sulfur to tRNA to produce 4-thiouridine in position 8 of tRNAs, which functions as a near-UV photosensor. Also catalyzes the transfer of sulfur to the sulfur carrier protein ThiS, forming ThiS-thiocarboxylate. This is a step in the synthesis of thiazole, in the thiamine biosynthesis pathway. The sulfur is donated as persulfide by IscS. The sequence is that of tRNA sulfurtransferase from Desulfurococcus amylolyticus (strain DSM 18924 / JCM 16383 / VKM B-2413 / 1221n) (Desulfurococcus kamchatkensis).